The primary structure comprises 230 residues: Urease accessory protein UreF (230 aa).

It belongs to the UreF family. In terms of assembly, ureD, UreF and UreG form a complex that acts as a GTP-hydrolysis-dependent molecular chaperone, activating the urease apoprotein by helping to assemble the nickel containing metallocenter of UreC. The UreE protein probably delivers the nickel.

It localises to the cytoplasm. Functionally, required for maturation of urease via the functional incorporation of the urease nickel metallocenter. This chain is Urease accessory protein UreF, found in Marinomonas sp. (strain MWYL1).